The primary structure comprises 396 residues: Aspartic protease 1 (396 aa).

Positions Met-1 to Ala-15 are cleaved as a signal peptide. Residues Tyr-68 to Ala-389 form the Peptidase A1 domain. A glycan (N-linked (GlcNAc...) asparagine) is linked at Asn-71. Residue Asp-86 is part of the active site. Cys-99 and Cys-104 form a disulfide bridge. Asp-278 is an active-site residue. A disulfide bridge links Cys-313 with Cys-349.

Belongs to the peptidase A1 family. Interacts with B.thuringiensis endotoxin Cry6Aa; the interaction prevents Cry6Aa proteolysis by host gut proteases.

The protein resides in the cytoplasm. Its subcellular location is the lysosome. The protein localises to the secreted. Functionally, aspartic protease, which is part of the necrosis cell death pathway. Promotes B.thuringiensis Cry6Aa stability by preventing its proteolysis by host gut proteases. Required for Cry6Aa-induced necrotic death of intestinal cells. Cry6Aa uptake into the host intestinal cells triggers an increase in intracellular Ca(2+) levels leading to lysosome rupture and to the subsequent release of asp-1 which leads to necrosis. In Caenorhabditis elegans, this protein is Aspartic protease 1.